The primary structure comprises 187 residues: Prepronociceptin (187 aa).

The signal sequence occupies residues 1-19 (MKILFCDVLLLSLLSSVFS). The propeptide occupies 20-95 (SCPRDCLTCQ…QPKASEMQHL (76 aa)). 3 consecutive repeat copies span residues 109–114 (DAEPGA), 115–120 (DAEPGA), and 121–126 (DAEPGA). Positions 109-126 (DAEPGADAEPGADAEPGA) are 3 X 6 AA tandem repeats of D-A-E-P-G-A. A disordered region spans residues 109–133 (DAEPGADAEPGADAEPGADDAEEVE). Residues 112–131 (PGADAEPGADAEPGADDAEE) show a composition bias toward acidic residues. A propeptide spanning residues 180–187 (TLHQNGNV) is cleaved from the precursor.

Belongs to the opioid neuropeptide precursor family. Specific enzymatic cleavages at paired basic residues probably yield other active peptides besides nociceptin. In terms of processing, the N-terminal domain contains 6 conserved cysteines thought to be involved in disulfide bonding and/or processing. As to expression, brain and spinal cord. Low levels in kidney and spleen.

It localises to the secreted. Ligand of the opioid receptor-like receptor OPRL1. It may act as a transmitter in the brain by modulating nociceptive and locomotor behavior. May be involved in neuronal differentiation and development. When administered intracerebroventricularly, nociceptin induces hyperalgesia and decreases locomotor activity. Functionally, blocks nociceptin action in pain transmission by inhibiting nociceptin-induced hyperalgesia and allodynia. In terms of biological role, has potent analgesic activity. The chain is Prepronociceptin (Pnoc) from Mus musculus (Mouse).